A 296-amino-acid polypeptide reads, in one-letter code: GTPase Era (296 aa).

The 168-residue stretch at 3–170 folds into the Era-type G domain; that stretch reads KSGFVTIVGR…KELMFKYIPE (168 aa). Positions 11–18 are G1; the sequence is GRPNVGKS. 11-18 serves as a coordination point for GTP; sequence GRPNVGKS. Positions 37–41 are G2; that stretch reads QTTRN. A G3 region spans residues 58–61; it reads DTPG. GTP contacts are provided by residues 58-62 and 120-123; these read DTPGI and NKID. The interval 120 to 123 is G4; sequence NKID. Residues 149 to 151 are G5; that stretch reads ISA. The KH type-2 domain maps to 201–278; it reads LSEEVPHGIA…YIRLWVKVKE (78 aa).

This sequence belongs to the TRAFAC class TrmE-Era-EngA-EngB-Septin-like GTPase superfamily. Era GTPase family. As to quaternary structure, monomer.

Its subcellular location is the cytoplasm. The protein resides in the cell membrane. Functionally, an essential GTPase that binds both GDP and GTP, with rapid nucleotide exchange. Plays a role in 16S rRNA processing and 30S ribosomal subunit biogenesis and possibly also in cell cycle regulation and energy metabolism. This chain is GTPase Era, found in Clostridium botulinum (strain Okra / Type B1).